Reading from the N-terminus, the 235-residue chain is Small ribosomal subunit protein uS3 (235 aa).

The 69-residue stretch at 39 to 107 (IRDFIKKECH…ELHLNIVEVR (69 aa)) folds into the KH type-2 domain. Residues 213–235 (AARDRKAQELQDGPAPRGAGGRR) form a disordered region.

This sequence belongs to the universal ribosomal protein uS3 family. Part of the 30S ribosomal subunit. Forms a tight complex with proteins S10 and S14.

In terms of biological role, binds the lower part of the 30S subunit head. Binds mRNA in the 70S ribosome, positioning it for translation. The polypeptide is Small ribosomal subunit protein uS3 (Roseobacter denitrificans (strain ATCC 33942 / OCh 114) (Erythrobacter sp. (strain OCh 114))).